We begin with the raw amino-acid sequence, 284 residues long: 4-hydroxy-3-methylbut-2-enyl diphosphate reductase (284 aa).

C12 serves as a coordination point for [4Fe-4S] cluster. (2E)-4-hydroxy-3-methylbut-2-enyl diphosphate contacts are provided by H40 and H72. Residues H40 and H72 each coordinate dimethylallyl diphosphate. 2 residues coordinate isopentenyl diphosphate: H40 and H72. C94 contacts [4Fe-4S] cluster. (2E)-4-hydroxy-3-methylbut-2-enyl diphosphate is bound at residue H122. H122 contacts dimethylallyl diphosphate. Isopentenyl diphosphate is bound at residue H122. Catalysis depends on E124, which acts as the Proton donor. Residue T161 coordinates (2E)-4-hydroxy-3-methylbut-2-enyl diphosphate. Position 193 (C193) interacts with [4Fe-4S] cluster. S221, N223, and S264 together coordinate (2E)-4-hydroxy-3-methylbut-2-enyl diphosphate. The dimethylallyl diphosphate site is built by S221, N223, and S264. Isopentenyl diphosphate-binding residues include S221, N223, and S264.

This sequence belongs to the IspH family. [4Fe-4S] cluster is required as a cofactor.

It catalyses the reaction isopentenyl diphosphate + 2 oxidized [2Fe-2S]-[ferredoxin] + H2O = (2E)-4-hydroxy-3-methylbut-2-enyl diphosphate + 2 reduced [2Fe-2S]-[ferredoxin] + 2 H(+). The enzyme catalyses dimethylallyl diphosphate + 2 oxidized [2Fe-2S]-[ferredoxin] + H2O = (2E)-4-hydroxy-3-methylbut-2-enyl diphosphate + 2 reduced [2Fe-2S]-[ferredoxin] + 2 H(+). It participates in isoprenoid biosynthesis; dimethylallyl diphosphate biosynthesis; dimethylallyl diphosphate from (2E)-4-hydroxy-3-methylbutenyl diphosphate: step 1/1. The protein operates within isoprenoid biosynthesis; isopentenyl diphosphate biosynthesis via DXP pathway; isopentenyl diphosphate from 1-deoxy-D-xylulose 5-phosphate: step 6/6. In terms of biological role, catalyzes the conversion of 1-hydroxy-2-methyl-2-(E)-butenyl 4-diphosphate (HMBPP) into a mixture of isopentenyl diphosphate (IPP) and dimethylallyl diphosphate (DMAPP). Acts in the terminal step of the DOXP/MEP pathway for isoprenoid precursor biosynthesis. The protein is 4-hydroxy-3-methylbut-2-enyl diphosphate reductase of Dehalococcoides mccartyi (strain ATCC BAA-2266 / KCTC 15142 / 195) (Dehalococcoides ethenogenes (strain 195)).